A 172-amino-acid chain; its full sequence is L-2,4-diaminobutyric acid acetyltransferase (172 aa).

The N-acetyltransferase domain maps to 15–166; that stretch reads IVFDKPTVED…DEHEEELTFR (152 aa).

Belongs to the acetyltransferase family. EctA subfamily.

The enzyme catalyses L-2,4-diaminobutanoate + acetyl-CoA = (2S)-4-acetamido-2-aminobutanoate + CoA + H(+). Its pathway is amine and polyamine biosynthesis; ectoine biosynthesis; L-ectoine from L-aspartate 4-semialdehyde: step 2/3. Functionally, catalyzes the acetylation of L-2,4-diaminobutyrate (DABA) to gamma-N-acetyl-alpha,gamma-diaminobutyric acid (ADABA) with acetyl coenzyme A. In Marinococcus halophilus, this protein is L-2,4-diaminobutyric acid acetyltransferase (ectA).